The following is a 266-amino-acid chain: Outer kinetochore KNL1 complex subunit ZWINT (266 aa).

Residues 95–115 (DQNPDALASEDTSRQKATETK) are disordered. The segment covering 105–115 (DTSRQKATETK) has biased composition (basic and acidic residues). A coiled-coil region spans residues 136-237 (LSEALPQVKE…QRNQSYLQLL (102 aa)). Phosphoserine is present on residues Ser232 and Ser265.

Component of the KNL1 complex composed of KNL1 and ZWINT. Part of the ten-subunit outer kinetochore KMN network that includes the KNL1, MIS12 and NDC80 complexes; a bioriented kinetochore contains approximately 150 copies of the network. Interacts with the MIS12 complex subunits MIS12 DSN1, and PMF1. Interacts with the NDC80 complex subunit NDC80 during mitosis. Interacts with ZW10. Interacts with CETN3. As to expression, expressed abundantly in brain and at lower levels in testis and kidney.

The protein resides in the nucleus. Its subcellular location is the chromosome. It is found in the centromere. It localises to the kinetochore. Functionally, acts as a component of the outer kinetochore KNL1 complex that serves as a docking point for spindle assembly checkpoint components and mediates microtubule-kinetochore interactions. Kinetochores, consisting of a centromere-associated inner segment and a microtubule-contacting outer segment, play a crucial role in chromosome segregation by mediating the physical connection between centromeric DNA and spindle microtubules. The outer kinetochore is made up of the ten-subunit KMN network, comprising the MIS12, NDC80 and KNL1 complexes, and auxiliary microtubule-associated components; together they connect the outer kinetochore with the inner kinetochore, bind microtubules, and mediate interactions with mitotic checkpoint proteins that delay anaphase until chromosomes are bioriented on the spindle. Targets the RZZ complex to the kinetochore at prometaphase. Recruits MAD2L1 to the kinetochore, but is not required for BUB1B localization. In addition to orienting mitotic chromosomes, it is also essential for alignment of homologous chromosomes during meiotic metaphase I. In meiosis I, required to activate the spindle assembly checkpoint at unattached kinetochores to correct erroneous kinetochore-microtubule attachments. The chain is Outer kinetochore KNL1 complex subunit ZWINT (Zwint) from Rattus norvegicus (Rat).